The chain runs to 458 residues: Succinate-semialdehyde dehydrogenase [NADP(+)] 1 (458 aa).

Residues 134–135, 158–161, and 210–211 contribute to the NADP(+) site; these read WN, KHAS, and GS. The active-site Proton acceptor is E232. NADP(+) is bound at residue L233. Residue C266 is the Nucleophile of the active site. Position 363 (E363) interacts with NADP(+).

The protein belongs to the aldehyde dehydrogenase family.

The enzyme catalyses succinate semialdehyde + NADP(+) + H2O = succinate + NADPH + 2 H(+). Catalyzes the NADP(+)-dependent oxidation of succinate semialdehyde to succinate. It is believed to be the main source of succinate semialdehyde dehydrogenase activity in Mycobacterium. The polypeptide is Succinate-semialdehyde dehydrogenase [NADP(+)] 1 (gabD1) (Mycobacterium ulcerans (strain Agy99)).